We begin with the raw amino-acid sequence, 547 residues long: ATP synthase subunit alpha (547 aa).

172 to 179 (GDRKTGKT) provides a ligand contact to ATP.

This sequence belongs to the ATPase alpha/beta chains family. In terms of assembly, F-type ATPases have 2 components, CF(1) - the catalytic core - and CF(0) - the membrane proton channel. CF(1) has five subunits: alpha(3), beta(3), gamma(1), delta(1), epsilon(1). CF(0) has three main subunits: a(1), b(2) and c(9-12). The alpha and beta chains form an alternating ring which encloses part of the gamma chain. CF(1) is attached to CF(0) by a central stalk formed by the gamma and epsilon chains, while a peripheral stalk is formed by the delta and b chains.

It is found in the cell membrane. It catalyses the reaction ATP + H2O + 4 H(+)(in) = ADP + phosphate + 5 H(+)(out). Produces ATP from ADP in the presence of a proton gradient across the membrane. The alpha chain is a regulatory subunit. The sequence is that of ATP synthase subunit alpha from Rhodococcus erythropolis (strain PR4 / NBRC 100887).